Here is a 417-residue protein sequence, read N- to C-terminus: MNIENYVIETASLAKSAARKMSIVSTVTKNNALNAMADALIENTNAIIEANKKDMENGREKGLTESLLDRLLLDEARIKSMAQGLRDVASLEDPIGEVIRMWRRPNNLKIGQIRVPLGVIGIIYEARPNVTVDAAALCVKSGNAVILRGGSEAINSNTTVARIISEAATKAGLPEGAINLIENPSRDAVNVMMKLNDYIDVLIPRGGAGLINAVVKNATVPVIQTGVGNCHVFVDASADLEMAANIVINAKTQRPAVCNAMESLLVHKDIADKFLPYLAEKLKPLNVEIKGCIRTQSLVEGATEATEEDWAKEYLDFKFASKVVDSLDEALDHIYKYSTKHSEVIVTNNYENSQRFLAEVDAAAVYVNASSRFTDGSEFGFGAEIGISTQKLHARGPMGLKELTSSKYIIYGEGQIR.

This sequence belongs to the gamma-glutamyl phosphate reductase family.

Its subcellular location is the cytoplasm. The catalysed reaction is L-glutamate 5-semialdehyde + phosphate + NADP(+) = L-glutamyl 5-phosphate + NADPH + H(+). The protein operates within amino-acid biosynthesis; L-proline biosynthesis; L-glutamate 5-semialdehyde from L-glutamate: step 2/2. Functionally, catalyzes the NADPH-dependent reduction of L-glutamate 5-phosphate into L-glutamate 5-semialdehyde and phosphate. The product spontaneously undergoes cyclization to form 1-pyrroline-5-carboxylate. In Clostridium novyi (strain NT), this protein is Gamma-glutamyl phosphate reductase.